Reading from the N-terminus, the 122-residue chain is MIPGEYRLQPGSIACNSGRDAMVVEVVNRGDRPVQIGSHYHFAEANRALEFDREAAYGRRLDIPAGTAARFEPGDRKTVQLIELAGTREVHGLSNAVNGKLDGGTAVAGEPRPGIAAERDHQ.

Positions 102–122 (DGGTAVAGEPRPGIAAERDHQ) are disordered.

Belongs to the urease beta subunit family. In terms of assembly, heterotrimer of UreA (gamma), UreB (beta) and UreC (alpha) subunits. Three heterotrimers associate to form the active enzyme.

It is found in the cytoplasm. The enzyme catalyses urea + 2 H2O + H(+) = hydrogencarbonate + 2 NH4(+). It participates in nitrogen metabolism; urea degradation; CO(2) and NH(3) from urea (urease route): step 1/1. The polypeptide is Urease subunit beta (Paenarthrobacter aurescens (strain TC1)).